The sequence spans 233 residues: UPF0502 protein YpsIP31758_2048 (233 aa).

The protein belongs to the UPF0502 family.

The protein is UPF0502 protein YpsIP31758_2048 of Yersinia pseudotuberculosis serotype O:1b (strain IP 31758).